Here is a 118-residue protein sequence, read N- to C-terminus: DNA-binding protein inhibitor ID-3-A (118 aa).

Residues 32–84 enclose the bHLH domain; the sequence is SHKGPGMDEPMGLLYDMNGCYSKLKELVPGIPQGSKLSQVEILQHVIDYIFDL.

As to quaternary structure, homodimer. Heterodimer with other HLH proteins. Interacts (via HLH domain) with the bHLH protein hes4/hairy2 (via Orange domain). Interacts with stat3. In terms of tissue distribution, at gastrula stage, expressed in all three germ layers, but becomes localized to discrete domains of the developing nervous system during neurulation, including the anterior neural plate, cement gland, eye anlagen, otic placode and both cranial and trunk premigratory and early migratory neural crest cells. Also expressed in the most dorsal and ventral portions of the myotome, the developing heart and anterior blood islets, and in the tail fin mesenchyme. Expressed at a low level in limbs, with expression decreasing as limbs develop, but expressed at a high level in blastemas (regenerated limbs), where expression is localized to both the blastermal epidermis and mesenchyme. Widely expressed in adults including the liver and heart.

The protein resides in the nucleus. Transcriptional regulator (lacking a basic DNA binding domain) which negatively regulates the basic helix-loop-helix (bHLH) transcription factors by forming heterodimers and inhibiting their DNA binding and transcriptional activity. Influences cell fate decisions in the embryo by sequestering and blocking the activity of the bHLH transcription factors that control these decisions. Inhibits the binding of myogenic bHLH-containing complexes to E-box DNA, thereby preventing activation of muscle-specific target genes. Also inhibits the activity of neurogenic factor neurod1/neuroD. Plays a role in cell cycle progression and survival of neural crest progenitors; binding to either hes4-B/hairy2b or stat3 blocks the formation of transcription factor complexes and the repressor function of hes4-B/hairy2B, to allow neural crest progenitors to differentiate. May play a role in the regulation of the circadian rhythm. The chain is DNA-binding protein inhibitor ID-3-A (id3-a) from Xenopus laevis (African clawed frog).